The chain runs to 452 residues: tRNA modification GTPase MnmE (452 aa).

3 residues coordinate (6S)-5-formyl-5,6,7,8-tetrahydrofolate: arginine 21, glutamate 78, and lysine 118. The 162-residue stretch at 214–375 folds into the TrmE-type G domain; that stretch reads GMKVVIAGRP…LREHLKKSMG (162 aa). Asparagine 224 contacts K(+). Residues 224–229, 243–249, and 268–271 each bind GTP; these read NAGKSS, TNIAGTT, and DTAG. Residue serine 228 coordinates Mg(2+). Positions 243, 245, and 248 each coordinate K(+). Threonine 249 is a Mg(2+) binding site. Lysine 452 provides a ligand contact to (6S)-5-formyl-5,6,7,8-tetrahydrofolate.

It belongs to the TRAFAC class TrmE-Era-EngA-EngB-Septin-like GTPase superfamily. TrmE GTPase family. Homodimer. Heterotetramer of two MnmE and two MnmG subunits. K(+) serves as cofactor.

Its subcellular location is the cytoplasm. Its function is as follows. Exhibits a very high intrinsic GTPase hydrolysis rate. Involved in the addition of a carboxymethylaminomethyl (cmnm) group at the wobble position (U34) of certain tRNAs, forming tRNA-cmnm(5)s(2)U34. This chain is tRNA modification GTPase MnmE, found in Actinobacillus pleuropneumoniae serotype 3 (strain JL03).